The chain runs to 572 residues: Phosphoglucomutase-1 (572 aa).

Residues T23, R27, 126–127, and K140 contribute to the substrate site; that span reads SH. S126 acts as the Phosphoserine intermediate in catalysis. S126 contacts Mg(2+). Mg(2+) contacts are provided by D308, D310, and D312. Residues 312–313, T373, 392–394, K405, and R527 each bind substrate; these read DR and EES.

Belongs to the phosphohexose mutase family. The cofactor is Mg(2+). In terms of processing, phosphorylated via a calcium-dependent protein kinase. Very rapidly (within 80 ms) dephosphorylated during triggered trichocyst exocytosis. Post-translationally, O-glycosylated with a short chain of mannose residues.

It localises to the cytoplasm. The catalysed reaction is alpha-D-glucose 1-phosphate = alpha-D-glucose 6-phosphate. Functionally, may be involved in membrane fusion in exocytosis. The protein is Phosphoglucomutase-1 (pp63-1) of Paramecium tetraurelia.